The primary structure comprises 74 residues: Translation initiation factor IF-1 (74 aa).

Positions 1 to 72 constitute an S1-like domain; that stretch reads MSKEDAIEVE…NKGRITYRLK (72 aa).

It belongs to the IF-1 family. Component of the 30S ribosomal translation pre-initiation complex which assembles on the 30S ribosome in the order IF-2 and IF-3, IF-1 and N-formylmethionyl-tRNA(fMet); mRNA recruitment can occur at any time during PIC assembly.

It localises to the cytoplasm. One of the essential components for the initiation of protein synthesis. Stabilizes the binding of IF-2 and IF-3 on the 30S subunit to which N-formylmethionyl-tRNA(fMet) subsequently binds. Helps modulate mRNA selection, yielding the 30S pre-initiation complex (PIC). Upon addition of the 50S ribosomal subunit IF-1, IF-2 and IF-3 are released leaving the mature 70S translation initiation complex. In Synechococcus sp. (strain JA-3-3Ab) (Cyanobacteria bacterium Yellowstone A-Prime), this protein is Translation initiation factor IF-1.